Reading from the N-terminus, the 689-residue chain is Small ribosomal subunit protein mS39 (689 aa).

A mitochondrion-targeting transit peptide spans 1–37 (MAGVSAVRWLGLRSRLGQPLTGRRAGLCKQARSCRFY). Position 126 is an N6-acetyllysine (lysine 126). 10 PPR repeats span residues 149 to 183 (IKDISEAALKERIELRKVKASVDMFDQLLQAGTTV), 184 to 219 (SLETTNSLLDLLCYFGDQEPSTDYHFQQTEQSEALE), 255 to 289 (NAHSYCTMIRGMVKHRAYEQALNLYTELLNNRLHA), 290 to 330 (DVYT…KVKP), 331 to 367 (NLQTFNTILKCLRRFHVFARSPALRILREMKAIGIEP), 368 to 404 (SLATYHHIIHVFDQPGDPLKRSSFIIYDIMNELMGKR), 412 to 446 (DDKFFQSAMSICSSLRDLELAYQVHGLLNTGDNWK), 454 to 488 (RNFYYSKFFDLICLMEQIDVTLKWYEDLIPSVYFP), 489 to 523 (HSQTLIHLLQALDVANRLEMIPKIWKDSKEYGHTF), and 572 to 606 (PATSLYCIAILFLRAGRTQEAWNMLELFRKHNKIP). Residues 665–689 (NLTALTSDSDTDSSSDSDSDTSEGK) form a disordered region. A compositionally biased stretch (acidic residues) spans 673–689 (SDTDSSSDSDSDTSEGK).

The protein belongs to the mitochondrion-specific ribosomal protein mS39 family. Component of the mitochondrial ribosome small subunit (28S) which comprises a 12S rRNA and about 30 distinct proteins. Associated with the 12S mitochondrial rRNA (12S mt-rRNA).

It localises to the mitochondrion. Mitochondrial RNA-binding protein that has a role in mitochondrial translation. This chain is Small ribosomal subunit protein mS39 (PTCD3), found in Pongo abelii (Sumatran orangutan).